A 642-amino-acid polypeptide reads, in one-letter code: UvrABC system protein C (642 aa).

Residues 20 to 97 form the GIY-YIG domain; the sequence is ERCGVYRMFD…IKKFQPKFNI (78 aa). Positions 207–242 constitute a UVR domain; it reads KELQENLSKKMEELSSQMRFEEAAEIRDRIKALSYV.

This sequence belongs to the UvrC family. Interacts with UvrB in an incision complex.

The protein resides in the cytoplasm. Functionally, the UvrABC repair system catalyzes the recognition and processing of DNA lesions. UvrC both incises the 5' and 3' sides of the lesion. The N-terminal half is responsible for the 3' incision and the C-terminal half is responsible for the 5' incision. This chain is UvrABC system protein C, found in Rickettsia felis (strain ATCC VR-1525 / URRWXCal2) (Rickettsia azadi).